The sequence spans 150 residues: MQIILLEKVANLGNLGDIVKVKDGYARNFLIPNRKARRATKEAIAEFEVRRAELEKIAAEKLAASQAVGEKLNGQAFEVTQKSGVDGRLFGSVTNGDVAELLKKAGFEVEKLQVRMPEGPLKMIGEHVVQVALHTDVVVDVTINVIGDHA.

It belongs to the bacterial ribosomal protein bL9 family.

Functionally, binds to the 23S rRNA. In Burkholderia vietnamiensis (strain G4 / LMG 22486) (Burkholderia cepacia (strain R1808)), this protein is Large ribosomal subunit protein bL9.